The following is a 291-amino-acid chain: uncharacterized protein (291 aa).

Positions 191–289 (KQMLNWIHLH…NMTPLSYKKM (99 aa)) constitute an HTH araC/xylS-type domain. DNA-binding regions (H-T-H motif) lie at residues 208-229 (EDIA…KRML) and 256-279 (VTEV…QQAM).

This is an uncharacterized protein from Bacillus subtilis (strain 168).